The chain runs to 860 residues: Receptor-like protein 31 (860 aa).

The N-terminal stretch at 1-23 is a signal peptide; that stretch reads MMIPSQSCFCFFFMVSFFLHTLA. At 24–809 the chain is on the extracellular side; that stretch reads SPTLRHCRHD…SEPEEHVINW (786 aa). Residues Asn-49, Asn-64, Asn-88, Asn-95, Asn-112, Asn-117, Asn-154, Asn-178, Asn-202, and Asn-213 are each glycosylated (N-linked (GlcNAc...) asparagine). LRR repeat units follow at residues 108-131, 132-155, 156-179, 181-202, 203-226, and 227-251; these read QHLH…LGNL, FRLT…IGNL, SRLT…IGNL, QLEY…TFSN, LTKL…DMSG, and FQNL…LFTI. One copy of the LRR 7; degenerate repeat lies at 252–276; the sequence is PSLRWANLEGNMFKGPIEFRNMYSP. LRR repeat units follow at residues 277 to 301, 302 to 325, 326 to 349, 350 to 374, 376 to 398, 400 to 419, 420 to 444, 446 to 468, 469 to 494, 496 to 517, 518 to 541, 543 to 564, 565 to 591, and 592 to 615; these read STRL…LSQY, LNLI…LFTI, PTLE…NMSS, SSSL…VSQY, NLEE…ISKL, KLEY…PSWL, WRLT…GLDE, QVQW…ICKL, RSLE…SFMV, LTDL…FVNA, TKLL…LIHC, AMQL…WLGS, LPSL…SIGF, and QSLR…YFSS. Asn-313, Asn-346, and Asn-364 each carry an N-linked (GlcNAc...) asparagine glycan. N-linked (GlcNAc...) asparagine glycosylation occurs at Asn-429. N-linked (GlcNAc...) asparagine glycans are attached at residues Asn-482, Asn-503, and Asn-516. N-linked (GlcNAc...) asparagine glycosylation is found at Asn-642, Asn-673, and Asn-697. LRR repeat units lie at residues 665 to 690, 691 to 714, 716 to 738, and 740 to 763; these read INEE…IGLL, KELR…LANL, KLEA…LGSL, and FMST…QFQG. N-linked (GlcNAc...) asparagine glycans are attached at residues Asn-745 and Asn-765. The chain crosses the membrane as a helical span at residues 810-830; the sequence is IAAGIAYGPGVVCGLVIGHIF. At 831–860 the chain is on the cytoplasmic side; the sequence is LSHKHECWFMEKFRRKKPKVVTRIARPSKH.

Belongs to the RLP family.

The protein resides in the cell membrane. The protein is Receptor-like protein 31 of Arabidopsis thaliana (Mouse-ear cress).